A 397-amino-acid chain; its full sequence is Kappa-carrageenase (397 aa).

A signal peptide spans 1-25 (MKPISIVAFPIPAISMLLLSAVSQA). The GH16 domain occupies 26 to 299 (ASMQPPIAKP…YVRTWVKVGN (274 aa)). An intrachain disulfide couples C98 to C268. The active-site Nucleophile is the E163. Residue D165 is part of the active site. The active-site Proton donor is the E168. The region spanning 316-387 (AVNSVQLSAA…TITVKTKNKG (72 aa)) is the BIG2 domain.

The protein belongs to the glycosyl hydrolase 16 family.

The protein localises to the periplasm. It catalyses the reaction Endohydrolysis of (1-&gt;4)-beta-D-linkages between D-galactose 4-sulfate and 3,6-anhydro-D-galactose in kappa-carrageenans.. The chain is Kappa-carrageenase (cgkA) from Pseudoalteromonas carrageenovora (Alteromonas carrageenovora).